A 416-amino-acid polypeptide reads, in one-letter code: tRNA(Met) cytidine acetate ligase (416 aa).

Residues valine 7–histidine 20, glycine 101, asparagine 162, and arginine 187–isoleucine 188 contribute to the ATP site.

This sequence belongs to the TmcAL family.

It localises to the cytoplasm. It catalyses the reaction cytidine(34) in elongator tRNA(Met) + acetate + ATP = N(4)-acetylcytidine(34) in elongator tRNA(Met) + AMP + diphosphate. Its function is as follows. Catalyzes the formation of N(4)-acetylcytidine (ac(4)C) at the wobble position of elongator tRNA(Met), using acetate and ATP as substrates. First activates an acetate ion to form acetyladenylate (Ac-AMP) and then transfers the acetyl group to tRNA to form ac(4)C34. The sequence is that of tRNA(Met) cytidine acetate ligase from Halalkalibacterium halodurans (strain ATCC BAA-125 / DSM 18197 / FERM 7344 / JCM 9153 / C-125) (Bacillus halodurans).